Reading from the N-terminus, the 124-residue chain is UPF0344 protein OB1184 (124 aa).

Transmembrane regions (helical) follow at residues 3-23 (HMHITSWALGLILFIIALVMY), 33-53 (IIHMILRLMFILIIITGGILT), 62-82 (MPILGEALVKALAGLWLVAMM), and 104-124 (IALVLVIVLGFFRLPMGFLFI).

The protein belongs to the UPF0344 family.

The protein localises to the cell membrane. The sequence is that of UPF0344 protein OB1184 from Oceanobacillus iheyensis (strain DSM 14371 / CIP 107618 / JCM 11309 / KCTC 3954 / HTE831).